A 613-amino-acid chain; its full sequence is MAEGVFQGAIGIDLGTTYSCVATYESSVEIIANEQGNRVTPSFVAFTPEERLIGDAAKNQAALNPENTVFDAKRLIGRRFDDESVQKDRKTWPFKLIDVEGNPVVEVQYLGETKTFSPQEISSMVLTKMKEIAEAKIGQKVEKAVITVPAYFNDAQRQATKDAGSISGLNVLRIINEPTAAAIAYGLGAGKSEKERHVLIFDLGGGTFDVSLLHIAGGVYTVKSTSGNTHLGGQDFDTNMLEHFKNEFKKKTGNDISGDARALRRLRTACERAKRTLSSVTQTTIEVDSLYNGDDFETSITRARFEDLNSSLFKSTLEPVEQVLKDAKVPKTEIDEVVLVGGSTRIPKVQKMLSDFFEGKQLEKSINPDEAVAYGAAVQGAILTGQSTSEDTKDLLLLDVAPLSLGVGMQGDIFGIVVPRNTTVPTIKRRTFTTVADHQSTVQFPVYQGERVNCKENTLLGEFDLKNIPPMQAGEPVLEAIFEVDANGILKVTAVEKSTGKSANITISNAVGRLSSDEIEKMVNQAEEFKAADEAFAKKHEARQRLESYVASIEQQVTDPVLSSKLKRGSKTKIESALSDALASLEIQDASTDDLRKAEVGLKRVVTKAMSSR.

A nucleotide binding domain (NBD) region spans residues 1-391 (MAEGVFQGAI…ILTGQSTSED (391 aa)). ATP-binding positions include 16 to 18 (TTY), K73, 205 to 207 (GGT), 271 to 278 (ERAKRTLS), and G342. Residues 392–402 (TKDLLLLDVAP) are inter-domain linker. A substrate binding domain (SBD) region spans residues 403-613 (LSLGVGMQGD…RVVTKAMSSR (211 aa)). Residues 516 to 612 (SDEIEKMVNQ…KRVVTKAMSS (97 aa)) are lid domain (SBDalpha). The Nuclear export signal signature appears at 574–582 (IESALSDAL).

The protein belongs to the heat shock protein 70 family. Ssb-type Hsp70 subfamily. In terms of assembly, binds to ribosomes. Binds close to the ribosomal tunnel exit via contacts with both ribosomal proteins and rRNA. Directly interacts with nascent polypeptides. This interaction is dependent on the ribosome-associated complex (RAC). Interacts with SSE1. Interacts with FES1.

Its subcellular location is the cytoplasm. It carries out the reaction ATP + H2O = ADP + phosphate + H(+). Its function is as follows. Ribosome-bound, Hsp70-type chaperone that assists in the cotranslational folding of newly synthesized proteins in the cytosol. Stimulates folding by interacting with nascent chains, binding to short, largely hydrophobic sequences exposed by unfolded proteins, thereby stabilizing longer, more slowly translated, and aggregation-prone nascent polypeptides and domains that cannot fold stably until fully synthesized. The Hsp70-protein substrate interaction depends on ATP-binding and on allosteric regulation between the NBD and the SBD. The ATP-bound state is characterized by a fast exchange rate of substrate (low affinity state), while in the ADP-bound state exchange is much slower (high affinity state). During the Hsp70 cycle, the chaperone switches between the ATP-bound state (open conformation) and the ADP-bound state (closed conformation) by major conformational rearrangements involving mainly the lid domain. Ssb cooperates with a specific Hsp40/Hsp70 co-chaperone termed the ribosome-associated complex (RAC), which stimulates the ATPase activity of the ribosome-associated pool of Ssbs and switches it to the high affinity substrate binding state. Hsp110 chaperone SSE1 and FES1 act as nucleotide exchange factors that cause substrate release. The chain is Ribosome-associated molecular chaperone SSB1 (SSB1) from Zygosaccharomyces rouxii (strain ATCC 2623 / CBS 732 / NBRC 1130 / NCYC 568 / NRRL Y-229).